The primary structure comprises 235 residues: Segregation and condensation protein A (235 aa).

This sequence belongs to the ScpA family. In terms of assembly, component of a cohesin-like complex composed of ScpA, ScpB and the Smc homodimer, in which ScpA and ScpB bind to the head domain of Smc. The presence of the three proteins is required for the association of the complex with DNA.

Its subcellular location is the cytoplasm. Participates in chromosomal partition during cell division. May act via the formation of a condensin-like complex containing Smc and ScpB that pull DNA away from mid-cell into both cell halves. This is Segregation and condensation protein A from Streptococcus equi subsp. equi (strain 4047).